The sequence spans 638 residues: 1-deoxy-D-xylulose-5-phosphate synthase (638 aa).

Residues H75 and 116–118 (AHS) each bind thiamine diphosphate. D147 provides a ligand contact to Mg(2+). Residues 148 to 149 (GA), N177, Y288, and E370 each bind thiamine diphosphate. Residue N177 participates in Mg(2+) binding.

It belongs to the transketolase family. DXPS subfamily. In terms of assembly, homodimer. It depends on Mg(2+) as a cofactor. Requires thiamine diphosphate as cofactor.

The catalysed reaction is D-glyceraldehyde 3-phosphate + pyruvate + H(+) = 1-deoxy-D-xylulose 5-phosphate + CO2. The protein operates within metabolic intermediate biosynthesis; 1-deoxy-D-xylulose 5-phosphate biosynthesis; 1-deoxy-D-xylulose 5-phosphate from D-glyceraldehyde 3-phosphate and pyruvate: step 1/1. Functionally, catalyzes the acyloin condensation reaction between C atoms 2 and 3 of pyruvate and glyceraldehyde 3-phosphate to yield 1-deoxy-D-xylulose-5-phosphate (DXP). The protein is 1-deoxy-D-xylulose-5-phosphate synthase of Cupriavidus pinatubonensis (strain JMP 134 / LMG 1197) (Cupriavidus necator (strain JMP 134)).